The sequence spans 1119 residues: uncharacterized protein (1119 aa).

An N-terminal signal peptide occupies residues 1 to 21 (MNNIYISLYIFFISYIIQLCF). Residues 170–206 (NKKKLDKEKKKNVIELKEYLEDLKKRMFDMQKRLNDI) adopt a coiled-coil conformation. 2 disordered regions span residues 606–627 (NNNT…IFNN) and 782–905 (ASVQ…EHDE). Basic and acidic residues predominate over residues 788 to 891 (DKGEDNNDND…EKDKSRDDNK (104 aa)). The stretch at 890-920 (NKAQNNNSTDNEEHDEITEQIGFLKNHNQKY) forms a coiled coil.

This is an uncharacterized protein from Plasmodium falciparum (isolate 3D7).